The primary structure comprises 401 residues: Ufm1-specific protease 2 (401 aa).

Active-site residues include Cys-234, Asp-358, and His-360.

The protein belongs to the peptidase C78 family.

Its subcellular location is the endoplasmic reticulum. The protein resides in the cytoplasm. The protein localises to the nucleus. Thiol-dependent isopeptidase that specifically cleaves UFM1, a ubiquitin-like modifier protein, from conjugated proteins. While it is also able to mediate the processing of UFM1 precursors, a prerequisite for conjugation reactions, ufsp2 mainly acts as a protein deUFMylase that mediates deconjugation of UFM1 from target proteins. The sequence is that of Ufm1-specific protease 2 from Danio rerio (Zebrafish).